Reading from the N-terminus, the 1009-residue chain is 2-oxoglutarate dehydrogenase, mitochondrial (1009 aa).

Residues 1–39 (MLRFIPSSAKARALRRSAVTAYRLNRLTCLSSLQQNRTF) constitute a mitochondrion transit peptide. Residues Arg-305, Asp-404, Asn-437, Ile-439, and Gln-669 each contribute to the thiamine diphosphate site. 3 residues coordinate Mg(2+): Asp-404, Asn-437, and Ile-439.

The protein belongs to the alpha-ketoglutarate dehydrogenase family. Thiamine diphosphate serves as cofactor. The cofactor is Mg(2+).

The protein resides in the mitochondrion matrix. The catalysed reaction is N(6)-[(R)-lipoyl]-L-lysyl-[protein] + 2-oxoglutarate + H(+) = N(6)-[(R)-S(8)-succinyldihydrolipoyl]-L-lysyl-[protein] + CO2. With respect to regulation, catabolite repressed. Functionally, the 2-oxoglutarate dehydrogenase complex catalyzes the overall conversion of 2-oxoglutarate to succinyl-CoA and CO(2). It contains multiple copies of three enzymatic components: 2-oxoglutarate dehydrogenase (E1), dihydrolipoamide succinyltransferase (E2) and lipoamide dehydrogenase (E3). This is 2-oxoglutarate dehydrogenase, mitochondrial (kgd1) from Schizosaccharomyces pombe (strain 972 / ATCC 24843) (Fission yeast).